Here is a 394-residue protein sequence, read N- to C-terminus: Proliferation-associated protein 2G4 (394 aa).

The residue at position 2 (serine 2) is an N-acetylserine. Position 2 is a phosphoserine (serine 2). The interval serine 2 to leucine 48 is necessary for nucleolar localization. The RNA-binding stretch occupies residues leucine 46 to alanine 54. Lysine 298 is covalently cross-linked (Glycyl lysine isopeptide (Lys-Gly) (interchain with G-Cter in SUMO2)). The interval leucine 301–aspartate 394 is necessary for nucleolar localization. Phosphoserine is present on serine 335. Positions leucine 358–aspartate 394 are disordered. At serine 361 the chain carries Phosphoserine; by PKC/PRKCD. The tract at residues serine 361–serine 375 is interaction with RNA. Over residues lysine 365 to serine 375 the composition is skewed to basic residues. A phosphothreonine mark is found at threonine 366 and threonine 386.

The protein belongs to the peptidase M24 family. In terms of assembly, isoform 2 interacts with the cytoplasmic domain of non-phosphorylated ERBB3; the interaction requires PKC activity. Interacts with AR. Treatment with HRG leads to dissociation from ERBB3 and increases association with AR. Interacts with nucleolin/NCL. Component of a ribonucleoprotein complex containing at least PA2G4, NCL, TOP1, PABPC2, RPLP0, acetylated histone H1 (HIST1H1A or H1F1), histone H1 2/4, RPL4, RPL8, RPL15, RPL18, RPL18A, RPL21, RPL11, RPL12, RPL28, RPL27, RPLP2 and RPL24. Interacts with HDAC2. Interacts with RB1; the interaction is enhanced upon PA2G4 dephosphorylation. Isoform 1 and isoform 2 interact with RNF20. Isoform 2 interacts with HUWE1. Interacts with AKT1. Interacts with DNAJC21. Post-translationally, phosphorylated on serine and threonine residues. Phosphorylation is enhanced by HRG treatment. Basal phosphorylation is PKC-dependent and HRG-induced phosphorylation is predominantly PKC-independent. Phosphorylation at Ser-361 by PKC/PRKCD regulates its nucleolar localization. Isoform 2 is polyubiquitinated, leading to proteasomal degradation and phosphorylation by PKC/PRKCD enhances polyubiquitination.

The protein localises to the cytoplasm. Its subcellular location is the nucleus. It localises to the nucleolus. May play a role in a ERBB3-regulated signal transduction pathway. Seems be involved in growth regulation. Acts a corepressor of the androgen receptor (AR) and is regulated by the ERBB3 ligand neuregulin-1/heregulin (HRG). Inhibits transcription of some E2F1-regulated promoters, probably by recruiting histone acetylase (HAT) activity. Binds RNA. Associates with 28S, 18S and 5.8S mature rRNAs, several rRNA precursors and probably U3 small nucleolar RNA. May be involved in regulation of intermediate and late steps of rRNA processing. May be involved in ribosome assembly. Mediates cap-independent translation of specific viral IRESs (internal ribosomal entry site). Together with PTBP1 is required for the translation initiation on the foot-and-mouth disease virus (FMDV) IRES. Regulates cell proliferation, differentiation, and survival. Isoform 1 suppresses apoptosis whereas isoform 2 promotes cell differentiation. This chain is Proliferation-associated protein 2G4 (Pa2g4), found in Rattus norvegicus (Rat).